Reading from the N-terminus, the 464-residue chain is tRNA modification GTPase MnmE (464 aa).

Residues Arg-25, Glu-87, and Lys-130 each contribute to the (6S)-5-formyl-5,6,7,8-tetrahydrofolate site. A TrmE-type G domain is found at Gly-226 to Gly-386. Asn-236 is a binding site for K(+). Residues Asn-236–Ser-241, Thr-255–Thr-261, and Asp-280–Gly-283 contribute to the GTP site. Ser-240 is a binding site for Mg(2+). K(+)-binding residues include Thr-255, Ile-257, and Thr-260. Thr-261 contacts Mg(2+). (6S)-5-formyl-5,6,7,8-tetrahydrofolate is bound at residue Lys-464.

This sequence belongs to the TRAFAC class TrmE-Era-EngA-EngB-Septin-like GTPase superfamily. TrmE GTPase family. Homodimer. Heterotetramer of two MnmE and two MnmG subunits. The cofactor is K(+).

It localises to the cytoplasm. Functionally, exhibits a very high intrinsic GTPase hydrolysis rate. Involved in the addition of a carboxymethylaminomethyl (cmnm) group at the wobble position (U34) of certain tRNAs, forming tRNA-cmnm(5)s(2)U34. The protein is tRNA modification GTPase MnmE of Burkholderia ambifaria (strain ATCC BAA-244 / DSM 16087 / CCUG 44356 / LMG 19182 / AMMD) (Burkholderia cepacia (strain AMMD)).